The chain runs to 265 residues: MNTTRTLDNSTIHLPRILCLHGGGTNARIFRAQCRGLIAGLKSEYRLVFAQAPFASQAGSDVLSVYSQWGPFRRWLRWRPEHPVIPPEDAVQEIDTWLEKAMHQDDLAGATGEWIALLGFSQGAKVSASLLYRQQSWQELFGTRPAGINFRFGILLAGQAPFISMDSDLTLDPPLPDASQITDLKHSERELFYGKGHVLRIPTLHVHGLRDKGLDHHRKLFEDFCAPQSRRLIEWDGDHRVPLKLKDVSLVIHQIRELAKETGVY.

Active-site charge relay system residues include serine 121, aspartate 211, and histidine 239.

It belongs to the LovG family.

The protein operates within secondary metabolite biosynthesis. Functionally, esterase; part of the cla gene cluster that produces clavatol and ortho-quinone methide. The clavatol biosynthesis cluster cla and the terrestric acid cluster tra are both involved in the production of peniphenones and penilactones. The non-reducing PKS claF is responsible for the formation of clavatol from successive condensations of 3 malonyl-CoA units, presumably with a simple acetyl-CoA starter unit, and 2 methylation steps. The esterase claE probably collaborates with claF by catalyzing the hydrolysis of ACP-bound acyl intermediates to free the ACP from stalled intermediates. The clavatol oxidase claD then converts clavatol to hydroxyclavatol. Spontaneous dehydration of hydroxyclavatol leads to the accumulation of the highly active ortho-quinone methide. On the other hand, the PKS-NRPS hybrid traA is involved in the formation of crustosic acid, with the help of traB and traD. The polyketide synthase module (PKS) of traA is responsible for the synthesis of the polyketide backbone via the condensation of an acetyl-CoA starter unit with 3 malonyl-CoA units. The downstream nonribosomal peptide synthetase (NRPS) module then amidates the carboxyl end of the polyketide with L-malic acid. Because traA lacks a designated enoylreductase (ER) domain, the required activity is provided the enoyl reductase traG. Crustosic acid undergoes decarboxylation and isomerization to the terrestric acid, catalyzed by the 2-oxoglutarate-dependent dioxygenase traH. Both acids are further converted to the 2 gamma-butyrolactones (R)-5-methyltetronic acid and (S)-5-carboxylmethyltetronic acid, with involvement of the cytochrome P450 monooxygenase claJ. Spontaneous addition of the methide to these gamma-butyrolactones leads to peniphenone D and penilactone D, which undergo again stereospecific attacking by methide to give penilactones A and B. In Penicillium crustosum (Blue mold fungus), this protein is Esterase claE.